The chain runs to 1842 residues: Plexin-B2 (1842 aa).

A signal peptide spans 1–19 (MALPLWALTFLGLTGLGLS). The Sema domain maps to 20–468 (LRSRKPESFR…TQDKVFRLPV (449 aa)). The Extracellular segment spans residues 20–1201 (LRSRKPESFR…EYDTRASDVP (1182 aa)). 2 disulfides stabilise this stretch: Cys-78–Cys-87 and Cys-112–Cys-120. Residues Asn-127 and Asn-242 are each glycosylated (N-linked (GlcNAc...) asparagine). 3 disulfide bridges follow: Cys-250/Cys-366, Cys-266/Cys-313, and Cys-331/Cys-353. N-linked (GlcNAc...) asparagine glycosylation is found at Asn-393 and Asn-451. 5 disulfides stabilise this stretch: Cys-471-Cys-488, Cys-477-Cys-520, Cys-480-Cys-497, Cys-491-Cys-503, and Cys-557-Cys-576. Asn-798 is a glycosylation site (N-linked (GlcNAc...) asparagine). IPT/TIG domains are found at residues 806–895 (PVIT…QFTY), 898–982 (PQPL…SFTY), and 986–1095 (PMIR…VFEY). Residues Asn-919, Asn-1053, and Asn-1072 are each glycosylated (N-linked (GlcNAc...) asparagine). Residues 1202 to 1222 (LSLILPLVMVPMVFIIVVSIY) form a helical membrane-spanning segment. Residues 1223-1842 (CYWRKSQQAE…AALENKVTDL (620 aa)) are Cytoplasmic-facing. Ser-1240, Ser-1248, and Ser-1574 each carry phosphoserine.

The protein belongs to the plexin family. As to quaternary structure, monomer, and heterodimer with PLXNB1. Interacts with MET, ARHGEF11 and ARHGEF12. May also interact with MST1R. In terms of tissue distribution, detected in macrophages from spleen and bone marrow (at protein level). Detected in granule cells in the developing cerebellum, dentate gyrus and olfactory bulb. Expressed in neurons and glia in the developing hippocampus.

The protein localises to the cell membrane. Its function is as follows. Cell surface receptor for SEMA4C, SEMA4D and SEMA4G that plays an important role in cell-cell signaling. Plays a role in glutamatergic synapse development and is required for SEMA4A-mediated excitatory synapse development. Binding to class 4 semaphorins promotes downstream activation of RHOA and phosphorylation of ERBB2 at 'Tyr-1248'. Also acts as a cell surface receptor for angiogenin (ANG); promoting ANG endocytosis and translocation to the cytoplasm or nucleus. Required for normal differentiation and migration of neuronal cells during brain corticogenesis and for normal embryonic brain development. Regulates the migration of cerebellar granule cells in the developing brain. Plays a role in RHOA activation and subsequent changes of the actin cytoskeleton. Plays a role in axon guidance, invasive growth and cell migration. May modulate the activity of RAC1 and CDC42. Down-regulates macrophage migration in wound-healing assays (in vitro). The sequence is that of Plexin-B2 from Mus musculus (Mouse).